We begin with the raw amino-acid sequence, 567 residues long: TPR repeat-containing protein MJ1428 (567 aa).

TPR repeat units lie at residues 14–47 (YEDW…KNTN), 48–81 (PIDW…SPSN), 83–115 (YFAY…IKNE), 116–148 (ELFE…ANSK), 150–183 (LNAL…NPSH), 199–234 (INSY…DENS), 236–268 (ISYY…FNRS), 269–301 (LYYA…NSQN), 303–335 (YAYF…YLEE), 344–379 (LNLY…ENSS), 380–412 (RWWY…NPKD), 414–446 (STLK…VNSL), and 505–538 (AYIY…EMYR).

This is TPR repeat-containing protein MJ1428 from Methanocaldococcus jannaschii (strain ATCC 43067 / DSM 2661 / JAL-1 / JCM 10045 / NBRC 100440) (Methanococcus jannaschii).